The chain runs to 125 residues: Acidic phospholipase A2 HTe (125 aa).

7 disulfide bridges follow: Cys-11–Cys-77, Cys-27–Cys-124, Cys-29–Cys-45, Cys-44–Cys-105, Cys-51–Cys-98, Cys-61–Cys-91, and Cys-84–Cys-96. Residues Tyr-28, Gly-30, and Gly-32 each coordinate Ca(2+). The active site involves His-48. Asp-49 serves as a coordination point for Ca(2+). Residue Asp-99 is part of the active site.

Belongs to the phospholipase A2 family. Group I subfamily. D49 sub-subfamily. The cofactor is Ca(2+). No glycosylation was detected on this protein. As to expression, expressed by the venom gland.

The protein localises to the secreted. It carries out the reaction a 1,2-diacyl-sn-glycero-3-phosphocholine + H2O = a 1-acyl-sn-glycero-3-phosphocholine + a fatty acid + H(+). Functionally, snake venom phospholipase A2 (PLA2) that blocks neuromuscular transmission, but that does not produce blockade by virtue of a selective action on nerve endings. Instead, the toxin acts both on nerve and on muscle. PLA2 catalyzes the calcium-dependent hydrolysis of the 2-acyl groups in 3-sn-phosphoglycerides. In Notechis scutatus scutatus (Mainland tiger snake), this protein is Acidic phospholipase A2 HTe.